The sequence spans 487 residues: 2-aminomuconic semialdehyde dehydrogenase (487 aa).

231-236 (GSQPTA) serves as a coordination point for NAD(+). The Proton acceptor role is filled by glutamate 253. Cysteine 287 serves as the catalytic Nucleophile.

Belongs to the aldehyde dehydrogenase family.

The protein resides in the cytoplasm. It catalyses the reaction 2-aminomuconate 6-semialdehyde + NAD(+) + H2O = (2Z,4E)-2-aminomuconate + NADH + 2 H(+). The protein operates within amino-acid degradation; L-kynurenine degradation. Functionally, catalyzes the NAD-dependent oxidation of 2-aminomuconic semialdehyde of the kynurenine metabolic pathway in L-tryptophan degradation. The polypeptide is 2-aminomuconic semialdehyde dehydrogenase (ALDH8A1) (Bos taurus (Bovine)).